Consider the following 162-residue polypeptide: MAPITVGDVVPDGTISFFDENDQLQTVSVHSIAAGKKVILFGVPGAFTPTCSMSHVPGFIGKAEELKSKGIDEIICFSVNDPFVMKAWGKTYPENKHVKFVADGSGEYTHLLGLELDLKDKGLGIRSRRFALLLDNLKVTVANVESGGEFTVSSAEDILKAL.

A Thioredoxin domain is found at Ile-4–Leu-162. Residue Cys-51 is the Cysteine sulfenic acid (-SOH) intermediate of the active site.

Belongs to the peroxiredoxin family. Prx5 subfamily. Monomer. In terms of tissue distribution, highly expressed in buds and flowers. Slightly expressed in green tissues. Also detected in pollen.

The protein resides in the cytoplasm. The catalysed reaction is [glutaredoxin]-dithiol + a hydroperoxide = [glutaredoxin]-disulfide + an alcohol + H2O. Thiol-specific peroxidase that catalyzes the reduction of hydrogen peroxide and organic hydroperoxides to water and alcohols, respectively. Plays a role in cell protection against oxidative stress by detoxifying peroxides and as sensor of hydrogen peroxide-mediated signaling events. This Arabidopsis thaliana (Mouse-ear cress) protein is Peroxiredoxin-2C (PRXIIC).